The following is a 318-amino-acid chain: Transaldolase (318 aa).

Residue K132 is the Schiff-base intermediate with substrate of the active site.

Belongs to the transaldolase family. Type 1 subfamily. As to quaternary structure, homodimer.

It localises to the cytoplasm. It carries out the reaction D-sedoheptulose 7-phosphate + D-glyceraldehyde 3-phosphate = D-erythrose 4-phosphate + beta-D-fructose 6-phosphate. It participates in carbohydrate degradation; pentose phosphate pathway; D-glyceraldehyde 3-phosphate and beta-D-fructose 6-phosphate from D-ribose 5-phosphate and D-xylulose 5-phosphate (non-oxidative stage): step 2/3. Its function is as follows. Transaldolase is important for the balance of metabolites in the pentose-phosphate pathway. The chain is Transaldolase from Shewanella baltica (strain OS223).